The chain runs to 398 residues: Phosphoglycerate kinase (398 aa).

Residues 23-25, arginine 38, 61-64, arginine 122, and arginine 155 contribute to the substrate site; these read DFN and HLGK. Residues lysine 206, glycine 297, glutamate 328, and 354–357 contribute to the ATP site; that span reads GGDS.

Belongs to the phosphoglycerate kinase family. As to quaternary structure, monomer.

It is found in the cytoplasm. It catalyses the reaction (2R)-3-phosphoglycerate + ATP = (2R)-3-phospho-glyceroyl phosphate + ADP. The protein operates within carbohydrate degradation; glycolysis; pyruvate from D-glyceraldehyde 3-phosphate: step 2/5. This chain is Phosphoglycerate kinase, found in Clostridium novyi (strain NT).